The following is a 246-amino-acid chain: DNA-directed RNA polymerase subunit alpha (246 aa).

The protein belongs to the RNA polymerase alpha chain family. In plastids the minimal PEP RNA polymerase catalytic core is composed of four subunits: alpha, beta, beta', and beta''. When a (nuclear-encoded) sigma factor is associated with the core the holoenzyme is formed, which can initiate transcription (Potential).

The protein localises to the plastid. It carries out the reaction RNA(n) + a ribonucleoside 5'-triphosphate = RNA(n+1) + diphosphate. DNA-dependent RNA polymerase catalyzes the transcription of DNA into RNA using the four ribonucleoside triphosphates as substrates. In Helicosporidium sp. subsp. Simulium jonesii (Green alga), this protein is DNA-directed RNA polymerase subunit alpha (rpoA).